We begin with the raw amino-acid sequence, 611 residues long: Phosphoenolpyruvate carboxykinase [GTP] (611 aa).

Substrate is bound by residues Arg-82 and 222–224 (YGG). Mn(2+) is bound by residues Lys-231 and His-251. Residue Ser-273 participates in substrate binding. 274-279 (ACGKTN) is a GTP binding site. Residue Cys-275 is part of the active site. A Mn(2+)-binding site is contributed by Asp-298. Residue 389 to 391 (NSR) participates in substrate binding. Residues Arg-391, Arg-422, and 517-520 (FGDN) contribute to the GTP site.

The protein belongs to the phosphoenolpyruvate carboxykinase [GTP] family. As to quaternary structure, monomer. The cofactor is Mn(2+).

Its subcellular location is the cytoplasm. It catalyses the reaction oxaloacetate + GTP = phosphoenolpyruvate + GDP + CO2. It functions in the pathway carbohydrate biosynthesis; gluconeogenesis. In terms of biological role, catalyzes the conversion of oxaloacetate (OAA) to phosphoenolpyruvate (PEP), the rate-limiting step in the metabolic pathway that produces glucose from lactate and other precursors derived from the citric acid cycle. The chain is Phosphoenolpyruvate carboxykinase [GTP] from Arthrobacter sp. (strain FB24).